The primary structure comprises 435 residues: Dual specificity mitogen-activated protein kinase kinase jkk-1 (435 aa).

Over residues 35–49 the composition is skewed to basic and acidic residues; the sequence is RDRRSTSVDQKHKEC. The segment at 35-90 is disordered; the sequence is RDRRSTSVDQKHKECSSTSSSPQHQRPNNIGYLTSPMERKFTPLSMKPSPSRRDTE. Residues 50-66 show a composition bias toward polar residues; sequence SSTSSSPQHQRPNNIGY. In terms of domain architecture, Protein kinase spans 122–385; sequence IHIISLLGSG…YRQLMKHDFY (264 aa). ATP is bound by residues 128–136 and Lys149; that span reads LGSGSCGVV. Asp246 (proton acceptor) is an active-site residue.

The protein belongs to the protein kinase superfamily. STE Ser/Thr protein kinase family. MAP kinase kinase subfamily. As to quaternary structure, interacts with unc-16. Mg(2+) is required as a cofactor. In terms of tissue distribution, expressed in most neurons, including nerve ring, head ganglions, dorsal and ventral nerve cords and tail ganglions.

Its subcellular location is the cytoplasm. It is found in the perikaryon. It localises to the cell projection. The protein resides in the axon. The enzyme catalyses L-seryl-[protein] + ATP = O-phospho-L-seryl-[protein] + ADP + H(+). It catalyses the reaction L-threonyl-[protein] + ATP = O-phospho-L-threonyl-[protein] + ADP + H(+). The catalysed reaction is L-tyrosyl-[protein] + ATP = O-phospho-L-tyrosyl-[protein] + ADP + H(+). Its function is as follows. Dual specificity protein kinase which acts as an essential component of the JNK signal transduction pathway. May phosphorylate jnk-1. Plays a role in coordinating locomotion via D-type GABAergic motoneurons and in regulating synaptic vesicle transport downstream of adapter protein unc-16 and probably by activating jnk-1. Positively regulates lifespan. Upon environmental stress such as heat stress regulates daf-16 nuclear translocation probably by activating jnk-1. Regulates germline cell apoptosis in response to heavy metals such as Cu(2+) and to arsenite. This chain is Dual specificity mitogen-activated protein kinase kinase jkk-1, found in Caenorhabditis elegans.